Consider the following 400-residue polypeptide: Aspartate/prephenate aminotransferase (400 aa).

L-aspartate is bound by residues glycine 39, tryptophan 125, and asparagine 175. The residue at position 239 (lysine 239) is an N6-(pyridoxal phosphate)lysine. Position 375 (arginine 375) interacts with L-aspartate.

The protein belongs to the class-I pyridoxal-phosphate-dependent aminotransferase family. In terms of assembly, homodimer. Requires pyridoxal 5'-phosphate as cofactor.

It is found in the cytoplasm. The catalysed reaction is L-aspartate + 2-oxoglutarate = oxaloacetate + L-glutamate. It carries out the reaction L-arogenate + 2-oxoglutarate = prephenate + L-glutamate. In terms of biological role, catalyzes the reversible conversion of aspartate and 2-oxoglutarate to glutamate and oxaloacetate. Can also transaminate prephenate in the presence of glutamate. The polypeptide is Aspartate/prephenate aminotransferase (Cereibacter sphaeroides (strain ATCC 17029 / ATH 2.4.9) (Rhodobacter sphaeroides)).